Here is a 947-residue protein sequence, read N- to C-terminus: DNA mismatch repair protein MutS 2 (947 aa).

The tract at residues 623–643 (IPNDTHLGSGPVPASRDGSDD) is disordered. Residue 659–666 (GPNMSGKS) participates in ATP binding. Residues 841–916 (AETADTGVEA…GAAAEDELPE (76 aa)) form a disordered region.

This sequence belongs to the DNA mismatch repair MutS family.

In terms of biological role, this protein is involved in the repair of mismatches in DNA. It is possible that it carries out the mismatch recognition step. This protein has a weak ATPase activity. The polypeptide is DNA mismatch repair protein MutS 2 (Haloarcula marismortui (strain ATCC 43049 / DSM 3752 / JCM 8966 / VKM B-1809) (Halobacterium marismortui)).